We begin with the raw amino-acid sequence, 420 residues long: 26S proteasome non-ATPase regulatory subunit 4 (420 aa).

The VWFA domain occupies 1–174; the sequence is MSQEATIIAV…TGSHLISVAP (174 aa). UIM domains lie at 210 to 229, 255 to 274, and 288 to 307; these read AEDP…QRMR, SEEA…NNTE, and SEED…MGEE. The interval 392–420 is disordered; that stretch reads RKAINALTKSQSQRGSKKDEKEDEDKQNS. The segment covering 407–420 has biased composition (basic and acidic residues); the sequence is SKKDEKEDEDKQNS.

The protein belongs to the proteasome subunit S5A family. The 26S proteasome is composed of a core protease, known as the 20S proteasome, capped at one or both ends by the 19S regulatory complex (RC). The RC is composed of at least 18 different subunits in two subcomplexes, the base and the lid, which form the portions proximal and distal to the 20S proteolytic core, respectively.

Its function is as follows. Binds and presumably selects ubiquitin-conjugates for destruction. The sequence is that of 26S proteasome non-ATPase regulatory subunit 4 from Schistosoma mansoni (Blood fluke).